Consider the following 227-residue polypeptide: Large ribosomal subunit protein uL3 (227 aa).

The protein belongs to the universal ribosomal protein uL3 family. As to quaternary structure, part of the 50S ribosomal subunit. Forms a cluster with proteins L14 and L19.

Its function is as follows. One of the primary rRNA binding proteins, it binds directly near the 3'-end of the 23S rRNA, where it nucleates assembly of the 50S subunit. This Leuconostoc citreum (strain KM20) protein is Large ribosomal subunit protein uL3.